Reading from the N-terminus, the 507-residue chain is Protein zntA (507 aa).

The signal sequence occupies residues 1–18; the sequence is MSIFAYSILAGLAPLLSS. Asparagine 31 is a glycosylation site (N-linked (GlcNAc...) asparagine). A helical membrane pass occupies residues 35-55; it reads FHILLCISAGLLFAVASLELI. A disordered region spans residues 124–179; the sequence is GLNLNNLNQATNLDNNEEDNDNLDNDGENEIENDHDHDHQEDEGGDNDHDHESEEK. A compositionally biased stretch (low complexity) spans 125 to 137; it reads LNLNNLNQATNLD. Residues 138–154 are compositionally biased toward acidic residues; that stretch reads NNEEDNDNLDNDGENEI. Over residues 155–179 the composition is skewed to basic and acidic residues; sequence ENDHDHDHQEDEGGDNDHDHESEEK. The chain crosses the membrane as a helical span at residues 185–205; sequence IPMYGIGFGFAILIIVESIFS. Residues 209–264 form a disordered region; that stretch reads GGGGGGGHHSHSHGSLSSSSSNDVISDYISNNNSNNINNNDDDNNNNNNNNDDDDD. Over residues 221 to 258 the composition is skewed to low complexity; the sequence is HGSLSSSSSNDVISDYISNNNSNNINNNDDDNNNNNNN. Asparagine 240, asparagine 298, asparagine 328, asparagine 342, and asparagine 351 each carry an N-linked (GlcNAc...) asparagine glycan. Residues 305–350 form a disordered region; that stretch reads PNIASPVMNKDNNNNDKDKNRNSNKSDIKNSGSINNGNNSGNNNNN. Over residues 317-332 the composition is skewed to basic and acidic residues; the sequence is NNNDKDKNRNSNKSDI. Over residues 333 to 350 the composition is skewed to low complexity; sequence KNSGSINNGNNSGNNNNN. The next 5 membrane-spanning stretches (helical) occupy residues 355-375, 388-408, 422-442, 451-471, and 486-506; these read LTITTFIALSIHSFVDGVVIS, VALAIVIHKIPDGLVLSSLIL, FFYFLLISCMTPLGSFISSFL, GAFVLGFGAGTFIYITSTAIL, and LFSIFLGYLLFIFLDSQFHGA.

It belongs to the ZIP transporter (TC 2.A.5) family.

The protein resides in the membrane. May transport divalent cations. May participate, with dstA, in the regulation of the differentiation of stalk cells during development. The sequence is that of Protein zntA (zntA) from Dictyostelium discoideum (Social amoeba).